The primary structure comprises 430 residues: Adenylosuccinate synthetase (430 aa).

Residues 12–18 (GDEGKGK) and 40–42 (GHT) each bind GTP. Asp13 serves as the catalytic Proton acceptor. Mg(2+)-binding residues include Asp13 and Gly40. IMP contacts are provided by residues 13-16 (DEGK), 38-41 (NAGH), Thr130, Arg144, Gln225, Thr240, and Arg304. His41 functions as the Proton donor in the catalytic mechanism. 300–306 (ATTGRPR) contributes to the substrate binding site. GTP is bound by residues Arg306, 332–334 (KLD), and 414–416 (SIG).

This sequence belongs to the adenylosuccinate synthetase family. As to quaternary structure, homodimer. The cofactor is Mg(2+).

It is found in the cytoplasm. The enzyme catalyses IMP + L-aspartate + GTP = N(6)-(1,2-dicarboxyethyl)-AMP + GDP + phosphate + 2 H(+). It functions in the pathway purine metabolism; AMP biosynthesis via de novo pathway; AMP from IMP: step 1/2. Its function is as follows. Plays an important role in the de novo pathway of purine nucleotide biosynthesis. Catalyzes the first committed step in the biosynthesis of AMP from IMP. This Geobacter metallireducens (strain ATCC 53774 / DSM 7210 / GS-15) protein is Adenylosuccinate synthetase.